The primary structure comprises 415 residues: Phosphoglycerate kinase (415 aa).

Substrate contacts are provided by residues 28–30 (DLN), Arg44, 67–70 (HQGR), Arg124, and Arg164. ATP is bound by residues Glu336 and 362–365 (GGHF).

It belongs to the phosphoglycerate kinase family.

It localises to the cytoplasm. The enzyme catalyses (2R)-3-phosphoglycerate + ATP = (2R)-3-phospho-glyceroyl phosphate + ADP. The protein operates within carbohydrate degradation; glycolysis; pyruvate from D-glyceraldehyde 3-phosphate: step 2/5. The sequence is that of Phosphoglycerate kinase (pgk) from Aeropyrum pernix (strain ATCC 700893 / DSM 11879 / JCM 9820 / NBRC 100138 / K1).